We begin with the raw amino-acid sequence, 461 residues long: MPREIITCQVGQCGNQIGMEFWKQLCMEHGINPEGILEDFAVNGEDRKDVFFYQADDEHYVPRAVLIDLEPRVINGIQKSAYSSLYNPENIYIAKHGGGAGNNWGRGYTDAEKVQDEILEMIDREADGSDSLEGFVLTHSIAGGTGSGFGSYLLERLNDHYPKKLIQTYSVFPIENDVVVQPYNCLLSIKRLTLNADCVVVLDNNALTSIAVDRLKILQPTFSQINSIVSTVMAASTTTLRYPGYMNNDMVGLIASLVPTPRCHFLMTGYTPLSLDQKFTSVRKTTVLDVMRRLLQTKNIMVTGAVKKGAYMSILNVIQGDVDPTQVHKSLQRIRERKLANFIPWGPASIQVALSKKSPYIDSGHKVSGLMLANHTGIRSIFKVLYDQYRTFRKRDAYMNIFKQTKIFEDNLDEFDSSDEVVKSLIDEYAAAEKMDYINWGSDDDDMQFDPREPPKFSNIQ.

Residue 142-148 (AGGTGSG) coordinates GTP.

The protein belongs to the tubulin family.

The protein resides in the cytoplasm. The protein localises to the cytoskeleton. Its subcellular location is the microtubule organizing center. It localises to the centrosome. In terms of biological role, tubulin is the major constituent of microtubules. The gamma chain is found at microtubule organizing centers (MTOC) such as the spindle poles or the centrosome, suggesting that it is involved in the minus-end nucleation of microtubule assembly. The protein is Tubulin gamma-2 chain of Euplotoides octocarinatus (Freshwater ciliate).